The chain runs to 526 residues: Phenylacetaldehyde oxime monooxygenase CYP71AN24 (526 aa).

The chain crosses the membrane as a helical span at residues 22 to 42; that stretch reads SFNIFLVPILCLSIFILFSLT. Cys465 lines the heme pocket.

Belongs to the cytochrome P450 family. Heme serves as cofactor. Expressed in seedlings and leaves.

It is found in the membrane. The enzyme catalyses (E)-phenylacetaldehyde oxime + reduced [NADPH--hemoprotein reductase] + O2 = (R)-mandelonitrile + oxidized [NADPH--hemoprotein reductase] + 2 H2O + H(+). It catalyses the reaction phenylacetonitrile + reduced [NADPH--hemoprotein reductase] + O2 = (R)-mandelonitrile + oxidized [NADPH--hemoprotein reductase] + H2O + H(+). Its function is as follows. Involved in L-phenylalanine-derived cyanogenic glycoside biosynthesis, including prunasin and amygdalin defensive agents. Catalyzes the conversion of phenylacetaldoxime (PAOx) and phenylacetonitrile (PAN) into mandelonitrile (MAN). To a lower extent, can convert various aromatic aldoximes and nitriles; mediates the transformation of 4-hydroxyphenylacetaldoxime, 4-hydroxyphenylacetonitrile, indole-3-acetal-doxime and indole-3-acetonitrile into the corresponding hydroxynitriles, but cannot use the aliphatic compounds 2-methylpropanaloxime and 2-methylpropanenitrile as substrates. This Prunus mume (Japanese apricot) protein is Phenylacetaldehyde oxime monooxygenase CYP71AN24.